Consider the following 425-residue polypeptide: Glutamate-1-semialdehyde 2,1-aminomutase (425 aa).

The residue at position 265 (K265) is an N6-(pyridoxal phosphate)lysine.

The protein belongs to the class-III pyridoxal-phosphate-dependent aminotransferase family. HemL subfamily. Homodimer. The cofactor is pyridoxal 5'-phosphate.

The protein localises to the cytoplasm. It carries out the reaction (S)-4-amino-5-oxopentanoate = 5-aminolevulinate. It functions in the pathway porphyrin-containing compound metabolism; protoporphyrin-IX biosynthesis; 5-aminolevulinate from L-glutamyl-tRNA(Glu): step 2/2. The chain is Glutamate-1-semialdehyde 2,1-aminomutase from Nitrosospira multiformis (strain ATCC 25196 / NCIMB 11849 / C 71).